The following is a 52-amino-acid chain: UPF0391 membrane protein Avin_10980 (52 aa).

The next 2 helical transmembrane spans lie at 4-24 (WSII…GGIA) and 29-49 (GIAK…LLFG).

The protein belongs to the UPF0391 family.

It is found in the cell membrane. The sequence is that of UPF0391 membrane protein Avin_10980 from Azotobacter vinelandii (strain DJ / ATCC BAA-1303).